Consider the following 246-residue polypeptide: 1-(5-phosphoribosyl)-5-[(5-phosphoribosylamino)methylideneamino] imidazole-4-carboxamide isomerase (246 aa).

Asp7 acts as the Proton acceptor in catalysis. Asp129 (proton donor) is an active-site residue.

The protein belongs to the HisA/HisF family.

Its subcellular location is the cytoplasm. It catalyses the reaction 1-(5-phospho-beta-D-ribosyl)-5-[(5-phospho-beta-D-ribosylamino)methylideneamino]imidazole-4-carboxamide = 5-[(5-phospho-1-deoxy-D-ribulos-1-ylimino)methylamino]-1-(5-phospho-beta-D-ribosyl)imidazole-4-carboxamide. It participates in amino-acid biosynthesis; L-histidine biosynthesis; L-histidine from 5-phospho-alpha-D-ribose 1-diphosphate: step 4/9. The protein is 1-(5-phosphoribosyl)-5-[(5-phosphoribosylamino)methylideneamino] imidazole-4-carboxamide isomerase of Buchnera aphidicola subsp. Acyrthosiphon pisum (strain 5A).